Reading from the N-terminus, the 161-residue chain is Protein PLASTID TRANSCRIPTIONALLY ACTIVE 7 (161 aa).

A chloroplast-targeting transit peptide spans 1–32 (MASFTCSSPSSILPIIDTRSGNLRCTFQSQVS).

Component of the transcriptionally active chromosome (TAC) complexes. Interacts with FLN1, PTAC10, PTAC12/HMR/PAP5 and PTAC14. Binds to SL1/MTERF3. Mostly expressed in leaves, flowers and seedlings, and, to a lower extent, in roots and stems.

It is found in the plastid. Its subcellular location is the chloroplast. In terms of biological role, essential for chloroplast development, especially for thylakoid formation. Involved in plastid gene expression, probably by maintaining plastid-encoded RNA polymerase (PEP) activity. The sequence is that of Protein PLASTID TRANSCRIPTIONALLY ACTIVE 7 from Arabidopsis thaliana (Mouse-ear cress).